Reading from the N-terminus, the 428-residue chain is Hercynine oxygenase (428 aa).

Fe cation is bound at residue His46. 82-85 (RASR) serves as a coordination point for gamma-L-glutamyl-L-cysteine. Fe cation is bound by residues His129 and His133. Residues Asp411 and Arg415 each coordinate gamma-L-glutamyl-L-cysteine.

Belongs to the EgtB family. In terms of assembly, monomer. Fe(2+) is required as a cofactor.

It catalyses the reaction gamma-L-glutamyl-L-cysteine + hercynine + O2 = gamma-L-glutamyl-hercynylcysteine S-oxide + H2O. The protein operates within amino-acid biosynthesis; ergothioneine biosynthesis. In terms of biological role, catalyzes the oxidative sulfurization of hercynine (N-alpha,N-alpha,N-alpha-trimethyl-L-histidine) into hercynyl-gamma-L-glutamyl-L-cysteine sulfoxide, a step in the biosynthesis pathway of ergothioneine. Cannot use the alternative thiols cysteine, N-acetylcysteine, or glutathione instead of gamma-glutamylcysteine as substrates, and histidine is a poor sulfur acceptor substrate compared to hercynine. This chain is Hercynine oxygenase, found in Mycolicibacterium smegmatis (strain ATCC 700084 / mc(2)155) (Mycobacterium smegmatis).